The sequence spans 243 residues: Small ribosomal subunit protein uS3 (243 aa).

The residue at position 2 (alanine 2) is an N-acetylalanine. Serine 6 carries the post-translational modification Phosphoserine; by PKC/PRKCD. The KH type-2 domain maps to 21-92 (LNEFLTRELA…SVELYAEKVA (72 aa)). Serine 35 is modified (phosphoserine). Threonine 42 is modified (phosphothreonine; by MAPK). Lysine 62 carries the N6-acetyllysine modification. An asymmetric dimethylarginine; by PRMT1 mark is found at arginine 64, arginine 65, and arginine 67. Position 70 is a phosphothreonine; by PKB (threonine 70). Lysine 90 participates in a covalent cross-link: Glycyl lysine isopeptide (Lys-Gly) (interchain with G-Cter in ubiquitin). A Phosphoserine modification is found at serine 104. Lysine 132 carries the N6-succinyllysine modification. A Glycyl lysine isopeptide (Lys-Gly) (interchain with G-Cter in ubiquitin) cross-link involves residue lysine 202. Serine 209 carries the post-translational modification Phosphoserine; by IKKB. A Glycyl lysine isopeptide (Lys-Gly) (interchain with G-Cter in SUMO2); alternate cross-link involves residue lysine 214. Lysine 214 is covalently cross-linked (Glycyl lysine isopeptide (Lys-Gly) (interchain with G-Cter in ubiquitin); alternate). Residues 214-243 (KDEILPTTPISEQKGGKPEPPAMPQPVPTA) are disordered. Residue threonine 220 is modified to Phosphothreonine. Phosphothreonine; by CDK1 and PKC/PRKCD is present on threonine 221. Serine 224 is subject to Phosphoserine. A Glycyl lysine isopeptide (Lys-Gly) (interchain with G-Cter in SUMO2) cross-link involves residue lysine 230. Positions 231–243 (PEPPAMPQPVPTA) are enriched in pro residues. Threonine 242 carries the phosphothreonine modification.

The protein belongs to the universal ribosomal protein uS3 family. As to quaternary structure, component of the 40S small ribosomal subunit. Identified in a IGF2BP1-dependent mRNP granule complex containing untranslated mRNAs. Interacts with HNRPD. Interacts with PRMT1; the interaction methylates RPS3. Interacts with SUMO1; the interaction sumoylates RPS3. Interacts with UBC9. Interacts with CDK1; the interaction phosphorylates RPS3. Interacts with PRKCD; the interaction phosphorylates RPS3. Interacts with PKB/AKT; the interaction phosphorylates RPS3. Interacts with E2F1; the interaction occurs in the absence of nerve growth factor and increases transcription of pro-apoptotic proteins BCL2L11/BIM and HRK/Dp5. Interacts with the base excision repair proteins APEX1 and OGG1; interaction with OGG1 increases OGG1 N-glycosylase activity. Interacts with UNG; the interaction increases the uracil excision activity of UNG1. Interacts with HSP90; the interaction prevents the ubiquitination and proteasome-dependent degradation of RPS3 and is suppressed by increased ROS levels. Interacts with TOM70; the interaction promotes translocation of RPS3 to the mitochondrion. Interacts (via N-terminus) with RELA (via N-terminus); the interaction enhances the DNA-binding activity of the NF-kappa-B p65-p50 complex. Interacts with NFKBIA; the interaction is direct and may bridge the interaction between RPS3 and RELA. Interacts with IKKB; the interaction phosphorylates RPS3 and enhances its translocation to the nucleus. Interacts (via KH domain) with MDM2 and TP53. Interacts with TRADD. Interacts with CRY1. Methylation by PRMT1 is required for import into the nucleolus and for ribosome assembly. In terms of processing, sumoylation by SUMO1 enhances protein stability through increased resistance to proteolysis. Sumoylation occurs at one or more of the three consensus sites, Lys-18, Lys-214 and Lys-230. Post-translationally, phosphorylation at Thr-221 by CDK1 occurs mainly in G2/M phase. Phosphorylation by PRKCD occurs on a non-ribosomal-associated form which results in translocation of RPS3 to the nucleus and enhances its endonuclease activity. Phosphorylated on Ser-209 by IKKB in response to activation of the NF-kappa-B p65-p50 complex which enhances the association of RPS3 with importin-alpha and mediates the nuclear translocation of RPS3. Phosphorylation by MAPK is required for translocation to the nucleus following exposure of cells to DNA damaging agents such as hydrogen peroxide. Phosphorylation by PKB/AKT mediates RPS3 nuclear translocation, enhances RPS3 endonuclease activity and suppresses RPS3-induced neuronal apoptosis. Ubiquitinated; ubiquitination is prevented by interaction with HSP90 which stabilizes the protein. Monoubiquitinated at Lys-214 by RNF10 and ZNF598 when a ribosome has stalled during translation of poly(A) sequences, leading to preclude synthesis of a long poly-lysine tail and initiate the ribosome quality control (RQC) pathway to degrade the potentially detrimental aberrant nascent polypeptide. Deubiquitinated at Lys-214 by USP10, preventing degradation by the proteasome and promoting 40S ribosome subunit recycling following ribosome dissociation. In terms of processing, ufmylated by UFL1.

Its subcellular location is the cytoplasm. The protein resides in the nucleus. It is found in the nucleolus. The protein localises to the mitochondrion inner membrane. It localises to the cytoskeleton. Its subcellular location is the spindle. The enzyme catalyses 2'-deoxyribonucleotide-(2'-deoxyribose 5'-phosphate)-2'-deoxyribonucleotide-DNA = a 3'-end 2'-deoxyribonucleotide-(2,3-dehydro-2,3-deoxyribose 5'-phosphate)-DNA + a 5'-end 5'-phospho-2'-deoxyribonucleoside-DNA + H(+). Functionally, component of the small ribosomal subunit. The ribosome is a large ribonucleoprotein complex responsible for the synthesis of proteins in the cell. Has endonuclease activity and plays a role in repair of damaged DNA. Cleaves phosphodiester bonds of DNAs containing altered bases with broad specificity and cleaves supercoiled DNA more efficiently than relaxed DNA. Displays high binding affinity for 7,8-dihydro-8-oxoguanine (8-oxoG), a common DNA lesion caused by reactive oxygen species (ROS). Has also been shown to bind with similar affinity to intact and damaged DNA. Stimulates the N-glycosylase activity of the base excision protein OGG1. Enhances the uracil excision activity of UNG1. Also stimulates the cleavage of the phosphodiester backbone by APEX1. When located in the mitochondrion, reduces cellular ROS levels and mitochondrial DNA damage. Has also been shown to negatively regulate DNA repair in cells exposed to hydrogen peroxide. Plays a role in regulating transcription as part of the NF-kappa-B p65-p50 complex where it binds to the RELA/p65 subunit, enhances binding of the complex to DNA and promotes transcription of target genes. Represses its own translation by binding to its cognate mRNA. Binds to and protects TP53/p53 from MDM2-mediated ubiquitination. Involved in spindle formation and chromosome movement during mitosis by regulating microtubule polymerization. Involved in induction of apoptosis through its role in activation of CASP8. Induces neuronal apoptosis by interacting with the E2F1 transcription factor and acting synergistically with it to up-regulate pro-apoptotic proteins BCL2L11/BIM and HRK/Dp5. Interacts with TRADD following exposure to UV radiation and induces apoptosis by caspase-dependent JNK activation. The protein is Small ribosomal subunit protein uS3 (RPS3) of Bos taurus (Bovine).